Reading from the N-terminus, the 235-residue chain is Motile sperm domain-containing protein 3 (235 aa).

Disordered regions lie at residues 1 to 25 (MRRG…RGAP) and 143 to 171 (ELQG…FQEH). Residues 33–145 (PVLVFPPDLV…RAPAYPLELQ (113 aa)) enclose the MSP domain. Over residues 149-164 (DPAPRPGPPAGTPPPT) the composition is skewed to pro residues. 2 helical membrane passes run 180 to 200 (SFLL…LPLP) and 213 to 233 (VSLG…MVFL).

The protein resides in the membrane. The polypeptide is Motile sperm domain-containing protein 3 (MOSPD3) (Homo sapiens (Human)).